Reading from the N-terminus, the 3251-residue chain is Centrosome-associated protein ALMS1 (3251 aa).

Acidic residues predominate over residues 1–26; it reads MEPEDLPWPDELEEEEEEEEEEGEEE. The tract at residues 1–116 is disordered; sequence MEPEDLPWPD…PPPPLSPRLR (116 aa). The segment covering 34 to 47 has biased composition (low complexity); that stretch reads NASAAATEEALTSE. Over residues 99–112 the composition is skewed to pro residues; sequence LPPPTPPPPPPPLS. Position 401 is a phosphoserine (S401). Tandem repeats lie at residues 440–485, 486–534, 540–587, 588–638, 639–684, 685–731, 732–777, 778–824, 825–871, 872–917, 918–959, 960–1005, 1006–1048, 1115–1163, 1164–1208, 1269–1314, and 1315–1362. Residues 440–1362 form a 17 X 47 AA approximate tandem repeat region; it reads QEELPDRHLN…HSEKHQLISE (923 aa). A disordered region spans residues 615 to 686; the sequence is FESGPAGQKS…AEKPVSPYQL (72 aa). The disordered stretch occupies residues 963 to 986; it reads MSDSQRTKGHKESDVPGPTDQKTG. 2 disordered regions span residues 1094 to 1115 and 1142 to 1189; these read ADRKTGAQIVSSSREKSSGFHQ and QTPG…SDQK. The span at 1158 to 1173 shows a compositional bias: basic and acidic residues; the sequence is EKLSDYQKASPHRDLT. S1305 bears the Phosphoserine mark. 4 positions are modified to phosphoserine: S1623, S1788, S1916, and S1958. Disordered stretches follow at residues 2421 to 2452, 2464 to 2485, 2659 to 2685, 2738 to 2804, 2822 to 2871, and 3002 to 3027; these read KSDTTVESSHSGSNDAIAPDFPPQMLGTRDDD, GIYSKRAATKGKNPSQKGDAAA, IKNQARDPKGKRQANEQKKDQKVTPEL, SLRA…SSQF, FNNV…PLNE, and FPTPSSSEARLEEDSDVTSSSEEKAK. The segment covering 2423–2434 has biased composition (polar residues); it reads DTTVESSHSGSN. 2 stretches are compositionally biased toward basic and acidic residues: residues 2659–2681 and 2747–2760; these read IKNQARDPKGKRQANEQKKDQKV and DDSRGGHRAREWTG. The span at 2762-2775 shows a compositional bias: basic residues; that stretch reads RQQKQKGKQHRKWS. A compositionally biased stretch (polar residues) spans 2823 to 2854; the sequence is NNVSNTSLDSRPSEESVSLTDSPNIFSSTDSP. The interval 3129–3251 is ALMS motif; sequence TLQESLQLHR…HLLGRKVPWD (123 aa).

This sequence belongs to the ALMS1 family. Ubiquitously expressed.

It is found in the cytoplasm. Its subcellular location is the cytoskeleton. The protein resides in the microtubule organizing center. It localises to the centrosome. The protein localises to the cilium basal body. It is found in the spindle pole. Its function is as follows. Involved in PCM1-dependent intracellular transport. Required, directly or indirectly, for the localization of NCAPD2 to the proximal ends of centrioles. Required for proper formation and/or maintenance of primary cilia (PC), microtubule-based structures that protrude from the surface of epithelial cells. The sequence is that of Centrosome-associated protein ALMS1 (Alms1) from Mus musculus (Mouse).